A 270-amino-acid chain; its full sequence is Glutamate racemase (270 aa).

Residues 10–11 and 42–43 each bind substrate; these read DS and YG. The active-site Proton donor/acceptor is the C74. Residue 75–76 coordinates substrate; that stretch reads NT. The Proton donor/acceptor role is filled by C189. Residue 190–191 participates in substrate binding; it reads TH.

Belongs to the aspartate/glutamate racemases family.

It carries out the reaction L-glutamate = D-glutamate. It participates in cell wall biogenesis; peptidoglycan biosynthesis. Its function is as follows. Provides the (R)-glutamate required for cell wall biosynthesis. In Bartonella henselae (strain ATCC 49882 / DSM 28221 / CCUG 30454 / Houston 1) (Rochalimaea henselae), this protein is Glutamate racemase.